The chain runs to 304 residues: tRNA pseudouridine synthase B (304 aa).

Asp-48 functions as the Nucleophile in the catalytic mechanism.

The protein belongs to the pseudouridine synthase TruB family. Type 1 subfamily.

It carries out the reaction uridine(55) in tRNA = pseudouridine(55) in tRNA. Responsible for synthesis of pseudouridine from uracil-55 in the psi GC loop of transfer RNAs. This is tRNA pseudouridine synthase B from Pseudomonas paraeruginosa (strain DSM 24068 / PA7) (Pseudomonas aeruginosa (strain PA7)).